We begin with the raw amino-acid sequence, 277 residues long: Urease accessory protein UreD (277 aa).

The disordered stretch occupies residues 1–20 (MRQTAQEDASPAPMQRAHGT).

It belongs to the UreD family. UreD, UreF and UreG form a complex that acts as a GTP-hydrolysis-dependent molecular chaperone, activating the urease apoprotein by helping to assemble the nickel containing metallocenter of UreC. The UreE protein probably delivers the nickel.

Its subcellular location is the cytoplasm. Functionally, required for maturation of urease via the functional incorporation of the urease nickel metallocenter. The sequence is that of Urease accessory protein UreD from Chelativorans sp. (strain BNC1).